The chain runs to 99 residues: Small ribosomal subunit protein uS14m (99 aa).

This sequence belongs to the universal ribosomal protein uS14 family.

It localises to the mitochondrion. In Oenothera berteroana (Bertero's evening primrose), this protein is Small ribosomal subunit protein uS14m (RPS14).